The following is an 83-amino-acid chain: Molybdopterin synthase sulfur carrier subunit (83 aa).

Residue Gly83 is modified to 1-thioglycine; alternate. Residue Gly83 is modified to Glycyl adenylate; alternate.

Belongs to the MoaD family. MOCS2A subfamily. Heterotetramer; composed of 2 small (MOCS2A) and 2 large (MOCS2B) subunits. In terms of processing, C-terminal thiocarboxylation occurs in 2 steps, it is first acyl-adenylated (-COAMP) via the hesA/moeB/thiF part of MOCS3, then thiocarboxylated (-COSH) via the rhodanese domain of MOCS3.

It localises to the cytoplasm. It participates in cofactor biosynthesis; molybdopterin biosynthesis. Functionally, acts as a sulfur carrier required for molybdopterin biosynthesis. Component of the molybdopterin synthase complex that catalyzes the conversion of precursor Z into molybdopterin by mediating the incorporation of 2 sulfur atoms into precursor Z to generate a dithiolene group. In the complex, serves as sulfur donor by being thiocarboxylated (-COSH) at its C-terminus by MOCS3. After interaction with MOCS2B, the sulfur is then transferred to precursor Z to form molybdopterin. The polypeptide is Molybdopterin synthase sulfur carrier subunit (Chlamydomonas reinhardtii (Chlamydomonas smithii)).